Reading from the N-terminus, the 835-residue chain is Probable alpha-glucuronidase A (835 aa).

An N-terminal signal peptide occupies residues Met1 to Ala18. Asn49, Asn101, Asn148, Asn221, Asn278, Asn309, Asn342, Asn460, Asn522, Asn571, Asn677, and Asn727 each carry an N-linked (GlcNAc...) asparagine glycan.

It belongs to the glycosyl hydrolase 67 family.

The protein localises to the secreted. It catalyses the reaction an alpha-D-glucuronoside + H2O = D-glucuronate + an alcohol. Its function is as follows. Alpha-glucuronidase involved in the hydrolysis of xylan, a major structural heterogeneous polysaccharide found in plant biomass representing the second most abundant polysaccharide in the biosphere, after cellulose. Releases 4-O-methylglucuronic acid from xylan. The polypeptide is Probable alpha-glucuronidase A (aguA) (Aspergillus oryzae (strain ATCC 42149 / RIB 40) (Yellow koji mold)).